The sequence spans 392 residues: Protein trapped in endoderm-1 (392 aa).

At 1-39 (MDQDMGMATGYFQDADMQMDEPAAATQSIYPHSATLFAA) the chain is on the extracellular side. Residues 40-60 (ISACVFVTIGVLGNLITLLAL) form a helical membrane-spanning segment. Topologically, residues 61 to 73 (LKSPTIREHATTA) are cytoplasmic. A helical membrane pass occupies residues 74-94 (FVISLSISDLLFCSFSLPLTA). Over 95–110 (VRFFQESWTFGTTLCK) the chain is Extracellular. Residues 111–131 (IFPVIFYGNVAVSLLSMVGIT) form a helical membrane-spanning segment. At 132–156 (LNRYILIACHSRYSQIYKPKFITLQ) the chain is on the cytoplasmic side. Residues 157 to 177 (LLFVWAVSFLLLLPPILGIWG) traverse the membrane as a helical segment. Topologically, residues 178–202 (EMGLDEATFSCTILKKEGRSIKKTL) are extracellular. A helical membrane pass occupies residues 203-223 (FVIGFLLPCLVIIVSYSCIYI). The Cytoplasmic segment spans residues 224–268 (TVLHQKKKIRNHDNFQIAAAKGSSSSGGGSYMTTTCTRKAREDNR). Residues 269–289 (LTVMMVTIFLCFLVCFLPLML) form a helical membrane-spanning segment. At 290–302 (ANVVDDERNTSYP) the chain is on the extracellular side. N-linked (GlcNAc...) asparagine glycosylation occurs at asparagine 298. Residues 303 to 323 (WLHIIASVMAWASSVINPIIY) form a helical membrane-spanning segment. Residues 324–392 (AASNRNYRVA…INQMCQTYSV (69 aa)) are Cytoplasmic-facing. Phosphoserine occurs at positions 359, 362, and 366. Phosphothreonine is present on threonine 372.

Belongs to the G-protein coupled receptor 1 family. In terms of tissue distribution, in embryos, expression is seen at highest levels in the cuprophilic cells and at lower levels in the amnioserosa, developing CNS, cardiac mesoderm primordium and midline glia.

It is found in the cell membrane. Essential for the first active step of germ cell migration: transepithelial migration of germ cells through the posterior midgut (PMG) epithelium. This Drosophila melanogaster (Fruit fly) protein is Protein trapped in endoderm-1 (Tre1).